The chain runs to 156 residues: Small ribosomal subunit protein uS7 (156 aa).

This sequence belongs to the universal ribosomal protein uS7 family. In terms of assembly, part of the 30S ribosomal subunit. Contacts proteins S9 and S11.

In terms of biological role, one of the primary rRNA binding proteins, it binds directly to 16S rRNA where it nucleates assembly of the head domain of the 30S subunit. Is located at the subunit interface close to the decoding center, probably blocks exit of the E-site tRNA. In Acholeplasma laidlawii (strain PG-8A), this protein is Small ribosomal subunit protein uS7.